Consider the following 190-residue polypeptide: Elongation factor P (190 aa).

K34 carries the N6-(3,6-diaminohexanoyl)-5-hydroxylysine modification.

Belongs to the elongation factor P family. May be beta-lysylated on the epsilon-amino group of Lys-34 by the combined action of EpmA and EpmB, and then hydroxylated on the C5 position of the same residue by EpmC (if this protein is present). Lysylation is critical for the stimulatory effect of EF-P on peptide-bond formation. The lysylation moiety may extend toward the peptidyltransferase center and stabilize the terminal 3-CCA end of the tRNA. Hydroxylation of the C5 position on Lys-34 may allow additional potential stabilizing hydrogen-bond interactions with the P-tRNA.

It localises to the cytoplasm. Its pathway is protein biosynthesis; polypeptide chain elongation. Functionally, involved in peptide bond synthesis. Alleviates ribosome stalling that occurs when 3 or more consecutive Pro residues or the sequence PPG is present in a protein, possibly by augmenting the peptidyl transferase activity of the ribosome. Modification of Lys-34 is required for alleviation. The polypeptide is Elongation factor P (Hahella chejuensis (strain KCTC 2396)).